The primary structure comprises 101 residues: ATP synthase subunit f, mitochondrial (101 aa).

The N-terminal 6 residues, 1-6 (MIFKRA), are a transit peptide targeting the mitochondrion.

This sequence belongs to the ATPase F chain family. F-type ATPases have 2 components, CF(1) - the catalytic core - and CF(0) - the membrane proton channel. In yeast, the dimeric form of ATP synthase consists of 17 polypeptides: alpha, beta, gamma, delta, epsilon, 4 (B), 5 (OSCP), 6 (A), 8, 9 (C), d, E (Tim11), f, g, h, i/j and k.

Its subcellular location is the mitochondrion. It is found in the mitochondrion inner membrane. In terms of biological role, mitochondrial membrane ATP synthase (F(1)F(0) ATP synthase or Complex V) produces ATP from ADP in the presence of a proton gradient across the membrane which is generated by electron transport complexes of the respiratory chain. F-type ATPases consist of two structural domains, F(1) - containing the extramembraneous catalytic core and F(0) - containing the membrane proton channel, linked together by a central stalk and a peripheral stalk. During catalysis, ATP synthesis in the catalytic domain of F(1) is coupled via a rotary mechanism of the central stalk subunits to proton translocation. Part of the complex F(0) domain. Minor subunit located with subunit a in the membrane. The polypeptide is ATP synthase subunit f, mitochondrial (ATP17) (Saccharomyces cerevisiae (strain ATCC 204508 / S288c) (Baker's yeast)).